We begin with the raw amino-acid sequence, 852 residues long: Leucine--tRNA ligase (852 aa).

The short motif at 51-61 (PYPSGDLHMGH) is the 'HIGH' region element. The short motif at 615–619 (KMSKS) is the 'KMSKS' region element. Residue K618 participates in ATP binding.

It belongs to the class-I aminoacyl-tRNA synthetase family.

Its subcellular location is the cytoplasm. It catalyses the reaction tRNA(Leu) + L-leucine + ATP = L-leucyl-tRNA(Leu) + AMP + diphosphate. The protein is Leucine--tRNA ligase of Clavibacter sepedonicus (Clavibacter michiganensis subsp. sepedonicus).